Reading from the N-terminus, the 439-residue chain is tRNA-2-methylthio-N(6)-dimethylallyladenosine synthase (439 aa).

Residues 2–119 enclose the MTTase N-terminal domain; the sequence is KKLYLKTHGC…LPDLLDSVIQ (118 aa). [4Fe-4S] cluster contacts are provided by Cys-11, Cys-48, Cys-82, Cys-156, Cys-160, and Cys-163. Residues 142–374 enclose the Radical SAM core domain; sequence RAEGPSAFVS…QNRINAKAAE (233 aa). The TRAM domain occupies 377-439; it reads QSMVGTQQRI…RPYSLWGEIC (63 aa).

Belongs to the methylthiotransferase family. MiaB subfamily. As to quaternary structure, monomer. [4Fe-4S] cluster is required as a cofactor.

The protein resides in the cytoplasm. It carries out the reaction N(6)-dimethylallyladenosine(37) in tRNA + (sulfur carrier)-SH + AH2 + 2 S-adenosyl-L-methionine = 2-methylsulfanyl-N(6)-dimethylallyladenosine(37) in tRNA + (sulfur carrier)-H + 5'-deoxyadenosine + L-methionine + A + S-adenosyl-L-homocysteine + 2 H(+). Catalyzes the methylthiolation of N6-(dimethylallyl)adenosine (i(6)A), leading to the formation of 2-methylthio-N6-(dimethylallyl)adenosine (ms(2)i(6)A) at position 37 in tRNAs that read codons beginning with uridine. This Coxiella burnetii (strain CbuK_Q154) (Coxiella burnetii (strain Q154)) protein is tRNA-2-methylthio-N(6)-dimethylallyladenosine synthase.